A 421-amino-acid polypeptide reads, in one-letter code: Mitochondrial tRNA-specific 2-thiouridylase 1 (421 aa).

ATP contacts are provided by residues 10-17 and Met36; that span reads ALSGGVDS. The segment at 96–98 is interaction with target base in tRNA; it reads NPD. Catalysis depends on Cys101, which acts as the Nucleophile. A disulfide bond links Cys101 and Cys222. Gly126 contacts ATP. The segment at 171-173 is interaction with tRNA; sequence KDQ. Cys222 serves as the catalytic Cysteine persulfide intermediate. The interaction with tRNA stretch occupies residues 334–335; it reads RH. Positions 395–421 are disordered; it reads KGQRRAGMATESPSDSPEDGPGLSPLL.

This sequence belongs to the MnmA/TRMU family. In terms of tissue distribution, ubiquitous. Abundantly expressed in tissues with high metabolic rates including heart, liver, kidney, and brain.

It localises to the mitochondrion. It catalyses the reaction 5-taurinomethyluridine(34) in tRNA + S-sulfanyl-L-cysteinyl-[protein] + AH2 + ATP = 5-taurinomethyl-2-thiouridine(34) in tRNA + L-cysteinyl-[protein] + A + AMP + diphosphate + H(+). Catalyzes the 2-thiolation of uridine at the wobble position (U34) of mitochondrial tRNA(Lys), tRNA(Glu) and tRNA(Gln). Required for the formation of 5-taurinomethyl-2-thiouridine (tm5s2U) of mitochondrial tRNA(Lys), tRNA(Glu), and tRNA(Gln) at the wobble position. ATP is required to activate the C2 atom of the wobble base. This Homo sapiens (Human) protein is Mitochondrial tRNA-specific 2-thiouridylase 1 (TRMU).